The following is a 288-amino-acid chain: uncharacterized protein (288 aa).

The chain crosses the membrane as a helical span at residues 92–112 (LPTILVILGVIVVIAIVYAII). Positions 121–183 (DDHNAASEKA…NDSEKLEIKA (63 aa)) are disordered. Composition is skewed to basic and acidic residues over residues 136-146 (SKYEIPKDSTL) and 154-181 (SEKETDTKKETKENEDKKKENDSEKLEI). The stretch at 147–185 (KENQNNSSEKETDTKKETKENEDKKKENDSEKLEIKAAG) forms a coiled coil.

It localises to the cell membrane. This is an uncharacterized protein from Bacillus subtilis (strain 168).